The sequence spans 400 residues: NADH-quinone oxidoreductase subunit D (400 aa).

The protein belongs to the complex I 49 kDa subunit family. In terms of assembly, NDH-1 is composed of 14 different subunits. Subunits NuoB, C, D, E, F, and G constitute the peripheral sector of the complex.

It localises to the cell inner membrane. The enzyme catalyses a quinone + NADH + 5 H(+)(in) = a quinol + NAD(+) + 4 H(+)(out). Its function is as follows. NDH-1 shuttles electrons from NADH, via FMN and iron-sulfur (Fe-S) centers, to quinones in the respiratory chain. The immediate electron acceptor for the enzyme in this species is believed to be a menaquinone. Couples the redox reaction to proton translocation (for every two electrons transferred, four hydrogen ions are translocated across the cytoplasmic membrane), and thus conserves the redox energy in a proton gradient. This is NADH-quinone oxidoreductase subunit D from Chlorobium phaeobacteroides (strain DSM 266 / SMG 266 / 2430).